Here is a 356-residue protein sequence, read N- to C-terminus: UDP-N-acetylglucosamine--N-acetylmuramyl-(pentapeptide) pyrophosphoryl-undecaprenol N-acetylglucosamine transferase (356 aa).

UDP-N-acetyl-alpha-D-glucosamine contacts are provided by residues 12 to 14, Arg-166, Ser-196, and Gln-291; that span reads TAG.

It belongs to the glycosyltransferase 28 family. MurG subfamily.

It is found in the cell membrane. The enzyme catalyses di-trans,octa-cis-undecaprenyl diphospho-N-acetyl-alpha-D-muramoyl-L-alanyl-D-glutamyl-meso-2,6-diaminopimeloyl-D-alanyl-D-alanine + UDP-N-acetyl-alpha-D-glucosamine = di-trans,octa-cis-undecaprenyl diphospho-[N-acetyl-alpha-D-glucosaminyl-(1-&gt;4)]-N-acetyl-alpha-D-muramoyl-L-alanyl-D-glutamyl-meso-2,6-diaminopimeloyl-D-alanyl-D-alanine + UDP + H(+). It participates in cell wall biogenesis; peptidoglycan biosynthesis. Cell wall formation. Catalyzes the transfer of a GlcNAc subunit on undecaprenyl-pyrophosphoryl-MurNAc-pentapeptide (lipid intermediate I) to form undecaprenyl-pyrophosphoryl-MurNAc-(pentapeptide)GlcNAc (lipid intermediate II). The protein is UDP-N-acetylglucosamine--N-acetylmuramyl-(pentapeptide) pyrophosphoryl-undecaprenol N-acetylglucosamine transferase of Geobacillus thermodenitrificans (strain NG80-2).